The following is a 405-amino-acid chain: Probable tRNA sulfurtransferase (405 aa).

Residues 60 to 165 (AEVDKRLKKV…QDAVYISNQL (106 aa)) enclose the THUMP domain. ATP-binding positions include 183–184 (ML), 208–209 (HF), Arg-265, Gly-287, and Gln-296.

Belongs to the ThiI family.

It localises to the cytoplasm. It catalyses the reaction [ThiI sulfur-carrier protein]-S-sulfanyl-L-cysteine + a uridine in tRNA + 2 reduced [2Fe-2S]-[ferredoxin] + ATP + H(+) = [ThiI sulfur-carrier protein]-L-cysteine + a 4-thiouridine in tRNA + 2 oxidized [2Fe-2S]-[ferredoxin] + AMP + diphosphate. The catalysed reaction is [ThiS sulfur-carrier protein]-C-terminal Gly-Gly-AMP + S-sulfanyl-L-cysteinyl-[cysteine desulfurase] + AH2 = [ThiS sulfur-carrier protein]-C-terminal-Gly-aminoethanethioate + L-cysteinyl-[cysteine desulfurase] + A + AMP + 2 H(+). Its pathway is cofactor biosynthesis; thiamine diphosphate biosynthesis. Its function is as follows. Catalyzes the ATP-dependent transfer of a sulfur to tRNA to produce 4-thiouridine in position 8 of tRNAs, which functions as a near-UV photosensor. Also catalyzes the transfer of sulfur to the sulfur carrier protein ThiS, forming ThiS-thiocarboxylate. This is a step in the synthesis of thiazole, in the thiamine biosynthesis pathway. The sulfur is donated as persulfide by IscS. This chain is Probable tRNA sulfurtransferase, found in Lactobacillus helveticus (strain DPC 4571).